The primary structure comprises 272 residues: Putative G-protein coupled receptor GPR32P1 (272 aa).

A disordered region spans residues 1–24 (MNGVSEGTRGCSDRQPGALTQGHS). Residues 1–46 (MNGVSEGTRGCSDRQPGALTQGHSCSRKMNASRCLSEEVGSLRPLT) lie on the Extracellular side of the membrane. Residue Asn30 is glycosylated (N-linked (GlcNAc...) asparagine). Residues 47-67 (MAVLSASFVVGVLGNGLVPWV) form a helical membrane-spanning segment. Residues 68-78 (TVFRMARTVST) are Cytoplasmic-facing. The helical transmembrane segment at 79-99 (VCFFHLALADFMLSLSLPILV) threads the bilayer. Over 100 to 116 (YYIVSRQWLLGEWACKL) the chain is Extracellular. The cysteines at positions 114 and 191 are disulfide-linked. The chain crosses the membrane as a helical span at residues 117–137 (YTGFVFLTFSTSNCLLVLISV). Residues 138 to 158 (DRCISVLYPVWALNHRTEQRA) are Cytoplasmic-facing. A helical transmembrane segment spans residues 159 to 179 (SWLAFGVWLLAAALCSAHLKF). Residues 180 to 213 (RTTRKWNGCMQCYLQFNLENETAQMWTQEVFGRQ) are Extracellular-facing. N-linked (GlcNAc...) asparagine glycosylation is present at Asn199. A helical transmembrane segment spans residues 214–234 (MAVIMAHFLLGFLGPLAIIGT). Over 235–272 (CAHLIRAKLLREGWVHANRPKRLLLVLVSALSAGSHLT) the chain is Cytoplasmic.

Belongs to the G-protein coupled receptor 1 family.

It localises to the cell membrane. Its function is as follows. Orphan receptor. The chain is Putative G-protein coupled receptor GPR32P1 (GPR32P1) from Homo sapiens (Human).